The sequence spans 885 residues: Putative membrane protein YdgH (885 aa).

7 helical membrane-spanning segments follow: residues 9-29, 181-201, 202-222, 227-247, 278-298, 304-324, and 354-374; these read WAIAAIVLALTVVLSLFSPNL, IIGLLLIVFRSVVTPFIPIVV, VGFSYLISQSILGILVYNVDF, FTQTFLVAILFGIGTDYCILL, ISGFAVLIGFSALGFAKFAIF, VAVGVGILMIILYTLLPLFMV, and VARPFLFIVITVVITLPFILT. The tract at residues 498–518 is disordered; the sequence is MAGQTGSASNGGSGGSLGDAA. Transmembrane regions (helical) follow at residues 716–736, 740–760, 772–792, 817–837, and 847–867; these read MVIMIIGLFIVLTILFRSMIM, MIASLLLTYYTSISITELIFV, VPFFSFVILIALGVDYSIFLL, VIITAAIILAGTFAAMMPSGV, and IIIGLLLYGLVILPLFIPAII.

Belongs to the resistance-nodulation-cell division (RND) (TC 2.A.6) family. MmpL subfamily.

The protein resides in the cell membrane. This is Putative membrane protein YdgH (ydgH) from Bacillus subtilis (strain 168).